Here is a 60-residue protein sequence, read N- to C-terminus: Large ribosomal subunit protein bL32 (60 aa).

Belongs to the bacterial ribosomal protein bL32 family.

This chain is Large ribosomal subunit protein bL32, found in Streptococcus sanguinis (strain SK36).